We begin with the raw amino-acid sequence, 248 residues long: Protein FAM133A (248 aa).

Basic and acidic residues predominate over residues 68–80 (NWKKELEKSREKL). Residues 68–248 (NWKKELEKSR…KKSGSSHKSR (181 aa)) are disordered. Residues 90 to 102 (KRERKKKRKKKSC) are compositionally biased toward basic residues. The span at 103–118 (RSSSSSSSSDSSSSSS) shows a compositional bias: low complexity. A compositionally biased stretch (basic residues) spans 127 to 138 (QGKRRKKKKNRS). 3 stretches are compositionally biased toward basic and acidic residues: residues 147 to 156 (HESESESKES), 163 to 175 (SKDE…DVRS), and 211 to 220 (RCEEREQAKE). Basic residues predominate over residues 221–248 (KVKKKKKKQHKKHSKKKKKKSGSSHKSR).

It belongs to the FAM133 family.

The sequence is that of Protein FAM133A (FAM133A) from Homo sapiens (Human).